The primary structure comprises 333 residues: Protein amalgam (333 aa).

The signal sequence occupies residues 1 to 23 (MARLRLLIGLIFCLAISLDSVLS). The Ig-like V-type domain maps to 25–128 (PVISQISKDV…VLVSATEKVT (104 aa)). N-linked (GlcNAc...) asparagine glycans are attached at residues asparagine 45 and asparagine 86. 3 disulfide bridges follow: cysteine 46–cysteine 117, cysteine 161–cysteine 208, and cysteine 251–cysteine 307. Ig-like C2-type domains follow at residues 139-223 (PVIA…RLIR) and 230-323 (PQIA…LHLF). Asparagine 308 carries an N-linked (GlcNAc...) asparagine glycan.

Its subcellular location is the cell membrane. This chain is Protein amalgam (Ama), found in Drosophila melanogaster (Fruit fly).